Reading from the N-terminus, the 281-residue chain is Phosphatidylglycerol--prolipoprotein diacylglyceryl transferase (281 aa).

3 helical membrane passes run 11–31 (IIFT…VISF), 57–77 (LLYS…IIFY), and 89–109 (VFYI…AIIV). Arg-140 contacts a 1,2-diacyl-sn-glycero-3-phospho-(1'-sn-glycerol). 3 helical membrane passes run 194–214 (PTQL…IYFF), 222–242 (GSIS…IEFF), and 255–275 (IITM…IIMY).

The protein belongs to the Lgt family.

The protein localises to the cell inner membrane. It carries out the reaction L-cysteinyl-[prolipoprotein] + a 1,2-diacyl-sn-glycero-3-phospho-(1'-sn-glycerol) = an S-1,2-diacyl-sn-glyceryl-L-cysteinyl-[prolipoprotein] + sn-glycerol 1-phosphate + H(+). It participates in protein modification; lipoprotein biosynthesis (diacylglyceryl transfer). In terms of biological role, catalyzes the transfer of the diacylglyceryl group from phosphatidylglycerol to the sulfhydryl group of the N-terminal cysteine of a prolipoprotein, the first step in the formation of mature lipoproteins. The sequence is that of Phosphatidylglycerol--prolipoprotein diacylglyceryl transferase from Buchnera aphidicola subsp. Acyrthosiphon pisum (strain APS) (Acyrthosiphon pisum symbiotic bacterium).